The following is a 398-amino-acid chain: MKKITILGSTGSIGTQTLDIVQQYPDQFQVVGLATRNNGELLAQQIKQFRPEIVAICQESQLNTIKDAIASLDYSPILLTGEAGVVEVARYGDSESVVTGIVGCAGLLPTIAAIEAGKDIALANKETLIAGGPVVLPLVEKHGVKLLPADSEHSAIFQCLQGVPKGGLRRIILTASGGAFRDWPVEQLKFVTVEDAIKHPNWSMGRKITVDSATLMNKGLEVIEAHYLFGLEYDKIDIVIHPQSIIHSLIELQDTSVLAQLGWPDMRLPLLYALSWPERIYTDWEPLDLVKAGSFTFREPDHHKYPCMQLAYAAGRSGGAIPAVLNAANEQAVALFLEEKIAFLEIPKLIEMACDRFTNQNTSTPTLEDILEADRWARQEVIKGSQEIAKGNKIMSLT.

Residues Thr10, Gly11, Ser12, Ile13, Asn38, and Asn124 each coordinate NADPH. A 1-deoxy-D-xylulose 5-phosphate-binding site is contributed by Lys125. Glu126 provides a ligand contact to NADPH. Asp150 provides a ligand contact to Mn(2+). Positions 151, 152, 176, and 199 each coordinate 1-deoxy-D-xylulose 5-phosphate. Glu152 is a binding site for Mn(2+). Position 205 (Gly205) interacts with NADPH. 1-deoxy-D-xylulose 5-phosphate-binding residues include Ser212, Asn217, Lys218, and Glu221. Glu221 is a Mn(2+) binding site.

Belongs to the DXR family. Requires Mg(2+) as cofactor. It depends on Mn(2+) as a cofactor.

It carries out the reaction 2-C-methyl-D-erythritol 4-phosphate + NADP(+) = 1-deoxy-D-xylulose 5-phosphate + NADPH + H(+). It participates in isoprenoid biosynthesis; isopentenyl diphosphate biosynthesis via DXP pathway; isopentenyl diphosphate from 1-deoxy-D-xylulose 5-phosphate: step 1/6. Catalyzes the NADPH-dependent rearrangement and reduction of 1-deoxy-D-xylulose-5-phosphate (DXP) to 2-C-methyl-D-erythritol 4-phosphate (MEP). The sequence is that of 1-deoxy-D-xylulose 5-phosphate reductoisomerase from Rippkaea orientalis (strain PCC 8801 / RF-1) (Cyanothece sp. (strain PCC 8801)).